The sequence spans 323 residues: o-succinylbenzoate synthase (323 aa).

K134 (proton donor) is an active-site residue. Mg(2+) contacts are provided by D162, E191, and D214. K236 (proton acceptor) is an active-site residue.

It belongs to the mandelate racemase/muconate lactonizing enzyme family. MenC type 1 subfamily. Requires a divalent metal cation as cofactor.

It catalyses the reaction (1R,6R)-6-hydroxy-2-succinyl-cyclohexa-2,4-diene-1-carboxylate = 2-succinylbenzoate + H2O. It participates in quinol/quinone metabolism; 1,4-dihydroxy-2-naphthoate biosynthesis; 1,4-dihydroxy-2-naphthoate from chorismate: step 4/7. Its pathway is quinol/quinone metabolism; menaquinone biosynthesis. Converts 2-succinyl-6-hydroxy-2,4-cyclohexadiene-1-carboxylate (SHCHC) to 2-succinylbenzoate (OSB). The polypeptide is o-succinylbenzoate synthase (Yersinia pseudotuberculosis serotype O:3 (strain YPIII)).